A 431-amino-acid chain; its full sequence is Trigger factor (431 aa).

The PPIase FKBP-type domain maps to 164-249; it reads GNIAVIDFKG…IKEIKVKELP (86 aa).

This sequence belongs to the FKBP-type PPIase family. Tig subfamily.

It localises to the cytoplasm. The catalysed reaction is [protein]-peptidylproline (omega=180) = [protein]-peptidylproline (omega=0). Involved in protein export. Acts as a chaperone by maintaining the newly synthesized protein in an open conformation. Functions as a peptidyl-prolyl cis-trans isomerase. This is Trigger factor from Clostridium tetani (strain Massachusetts / E88).